A 127-amino-acid polypeptide reads, in one-letter code: Riboflavin kinase (127 aa).

CDP is bound at residue 10-15 (GLGEGR). Mg(2+) contacts are provided by threonine 39 and asparagine 41. Threonine 96 and glutamate 104 together coordinate FMN. 109–112 (IQLR) is a CDP binding site.

Belongs to the archaeal riboflavin kinase family. The cofactor is Mg(2+).

The catalysed reaction is riboflavin + CTP = CDP + FMN + H(+). It functions in the pathway cofactor biosynthesis; FMN biosynthesis; FMN from riboflavin (CTP route): step 1/1. Functionally, catalyzes the CTP-dependent phosphorylation of riboflavin (vitamin B2) to form flavin mononucleotide (FMN). The protein is Riboflavin kinase of Methanococcus maripaludis (strain C5 / ATCC BAA-1333).